Consider the following 223-residue polypeptide: Cytochrome c biogenesis ATP-binding export protein CcmA (223 aa).

The region spanning 20-222 (LAAHALTYSR…PTRLLHLKKA (203 aa)) is the ABC transporter domain. An ATP-binding site is contributed by 52 to 59 (GPNGIGKT).

The protein belongs to the ABC transporter superfamily. CcmA exporter (TC 3.A.1.107) family. As to quaternary structure, the complex is composed of two ATP-binding proteins (CcmA) and two transmembrane proteins (CcmB).

Its subcellular location is the cell inner membrane. The catalysed reaction is heme b(in) + ATP + H2O = heme b(out) + ADP + phosphate + H(+). Functionally, part of the ABC transporter complex CcmAB involved in the biogenesis of c-type cytochromes; once thought to export heme, this seems not to be the case, but its exact role is uncertain. Responsible for energy coupling to the transport system. The sequence is that of Cytochrome c biogenesis ATP-binding export protein CcmA from Xylella fastidiosa (strain 9a5c).